The following is a 415-amino-acid chain: Palmitoyl-acyl carrier protein thioesterase, chloroplastic (415 aa).

Low complexity-rich tracts occupy residues 1 to 16 (MVATAASSAFFPLPSA) and 24 to 41 (KLGNKPSSLSPLKPKSTP). The transit peptide at 1-60 (MVATAASSAFFPLPSADTSSRPGKLGNKPSSLSPLKPKSTPNGGLQVKANASAPPKINGS) directs the protein to the chloroplast. The tract at residues 1-81 (MVATAASSAF…QEDAHSAPPP (81 aa)) is disordered. Active-site residues include Asn314, His316, and Cys351.

The protein belongs to the acyl-ACP thioesterase family.

The protein localises to the plastid. It localises to the chloroplast. The enzyme catalyses hexadecanoyl-[ACP] + H2O = hexadecanoate + holo-[ACP] + H(+). In terms of biological role, plays an essential role in chain termination during de novo fatty acid synthesis. High thioesterase activity for palmitoyl-ACP versus other acyl-ACPs. This is Palmitoyl-acyl carrier protein thioesterase, chloroplastic (FATB1) from Cuphea hookeriana (Cigar plant).